The chain runs to 364 residues: MAHRFPALTPEQKKELSDIAQRIVANGKGILAADESVGTMGNRLQRIKVENTEENRRQFREILFTVDNSINQSIGGVILFHETLYQKDSQGKLFRNILKEKGIVVGIKLDQGGAPLAGTNKETTIQGLDGLSERCAQYKKDGVDFGKWRAVLRIADQCPSSLAIQENANTLARYASICQQNGLVPIVEPEVIPDGDHDLEHCQYVTEKVLAAVYKALNDHHVYLEGTLLKPNMVTAGHACTKKYTPEQVAMATVTALHRTVPAAVPGICFLSGGMSEEDATLNLNAINLCPLPKPWKLSFSYGRALQASALAAWGGKAENKKATQEAFMKRAVVNCQAAKGQYVHTGSSGAASTQSLFTASYTY.

N-acetylalanine is present on alanine 2. Lysine 13 carries the N6-succinyllysine modification. Serine 36 is subject to Phosphoserine. Residue threonine 39 is modified to Phosphothreonine. Residue arginine 43 participates in beta-D-fructose 1,6-bisphosphate binding. At serine 89 the chain carries Phosphoserine. The residue at position 119 (threonine 119) is a Phosphothreonine. Lysine 121 carries the post-translational modification N6-succinyllysine. Serine 132 is subject to Phosphoserine. Residue glutamate 188 is the Proton acceptor of the active site. The Schiff-base intermediate with dihydroxyacetone-P role is filled by lysine 230. Phosphoserine is present on residues serine 272, serine 276, serine 299, and serine 301. Residue 272-274 (SGG) participates in beta-D-fructose 1,6-bisphosphate binding. Residue arginine 304 coordinates beta-D-fructose 1,6-bisphosphate. Serine 309 is subject to Phosphoserine. Residue lysine 317 is modified to N6-succinyllysine.

This sequence belongs to the class I fructose-bisphosphate aldolase family. Homotetramer. Interacts with BBS1, BBS2, BBS4 and BBS7. Forms a ternary complex with G6PD and TP53; this interaction is direct.

The protein localises to the cytoplasm. The protein resides in the cytosol. It is found in the cytoskeleton. Its subcellular location is the microtubule organizing center. It localises to the centrosome. The protein localises to the centriolar satellite. It catalyses the reaction beta-D-fructose 1,6-bisphosphate = D-glyceraldehyde 3-phosphate + dihydroxyacetone phosphate. The enzyme catalyses beta-D-fructose 1-phosphate = D-glyceraldehyde + dihydroxyacetone phosphate. The protein operates within carbohydrate degradation; glycolysis; D-glyceraldehyde 3-phosphate and glycerone phosphate from D-glucose: step 4/4. It functions in the pathway carbohydrate biosynthesis; gluconeogenesis. It participates in carbohydrate metabolism; fructose metabolism. Catalyzes the aldol cleavage of fructose 1,6-biphosphate to form two triosephosphates dihydroxyacetone phosphate and D-glyceraldehyde 3-phosphate in glycolysis as well as the reverse stereospecific aldol addition reaction in gluconeogenesis. In fructolysis, metabolizes fructose 1-phosphate derived from the phosphorylation of dietary fructose by fructokinase into dihydroxyacetone phosphate and D-glyceraldehyde. Acts as an adapter independently of its enzymatic activity, exerts a tumor suppressor role by stabilizing the ternary complex with G6PD and TP53 to inhibit G6PD activity and keep oxidative pentose phosphate metabolism in check. This chain is Fructose-bisphosphate aldolase B (ALDOB), found in Oryctolagus cuniculus (Rabbit).